Here is a 204-residue protein sequence, read N- to C-terminus: Nascent polypeptide-associated complex subunit alpha-like protein 3 (204 aa).

The segment covering 1–23 (MTAEQKVELAAKLEEQKIDLDKP) has biased composition (basic and acidic residues). Disordered stretches follow at residues 1-68 (MTAE…AMLK) and 141-165 (GETS…EEGV). Over residues 24 to 43 (EVEDDDDNDEDDSEDDDEAE) the composition is skewed to acidic residues. The residue at position 36 (S36) is a Phosphoserine. A compositionally biased stretch (basic and acidic residues) spans 44–59 (GHDGEAGGRSKQSRSE). In terms of domain architecture, NAC-A/B spans 56–121 (SRSEKKSRKA…AKIEDLSSQL (66 aa)). Over residues 141-152 (GETSSAATAAAV) the composition is skewed to low complexity. Over residues 153–164 (QDDDDEEVDEEG) the composition is skewed to acidic residues. Positions 159-204 (EVDEEGVEPKDIELVMTQAGVSKPRAVKALKLANGDIVSAIMELTT) constitute a UBA domain.

Belongs to the NAC-alpha family.

In terms of biological role, may promote appropriate targeting of ribosome-nascent polypeptide complexes. In Arabidopsis thaliana (Mouse-ear cress), this protein is Nascent polypeptide-associated complex subunit alpha-like protein 3.